Reading from the N-terminus, the 161-residue chain is RNA pyrophosphohydrolase (161 aa).

The Nudix hydrolase domain occupies Gly-6–Lys-149. The Nudix box motif lies at Gly-38 to Gly-59.

Belongs to the Nudix hydrolase family. RppH subfamily. The cofactor is a divalent metal cation.

In terms of biological role, accelerates the degradation of transcripts by removing pyrophosphate from the 5'-end of triphosphorylated RNA, leading to a more labile monophosphorylated state that can stimulate subsequent ribonuclease cleavage. This is RNA pyrophosphohydrolase from Marinomonas sp. (strain MWYL1).